Reading from the N-terminus, the 926-residue chain is Ubiquitin carboxyl-terminal hydrolase 4 (926 aa).

A Rhodanese domain is found at S205 to V328. S443 is modified (phosphoserine). The region spanning V562–V923 is the USP domain. C571 (nucleophile) is an active-site residue. Catalysis depends on H880, which acts as the Proton acceptor.

This sequence belongs to the peptidase C19 family. In terms of assembly, interacts with BRO1, RFU1 and VPS32. Associates with the 26S proteasome.

The protein localises to the cytoplasm. Its subcellular location is the late endosome membrane. The catalysed reaction is Thiol-dependent hydrolysis of ester, thioester, amide, peptide and isopeptide bonds formed by the C-terminal Gly of ubiquitin (a 76-residue protein attached to proteins as an intracellular targeting signal).. RFU1 is an inhibitor of deubiquitination activity. Ubiquitin thioesterase that acts at the late endosome/prevacuolar compartment to recover ubiquitin from ubiquitinated membrane proteins en route to the vacuole. Also removes ubiquitin from soluble proteins targeted to proteasomes. Is essential to maintain a normal level of free ubiquitin. Involved in the ammonium-induced down-regulation of the GAP1 permease and the UME3 destruction in response to oxidative stress. Has a role in the RAD9 checkpoint response to TOP1 poisons. Required for promoting coordination of DNA replication and avoids DNA overreplication. This chain is Ubiquitin carboxyl-terminal hydrolase 4 (DOA4), found in Saccharomyces cerevisiae (strain YJM789) (Baker's yeast).